Consider the following 321-residue polypeptide: Ferrochelatase (321 aa).

Positions 194 and 275 each coordinate Fe cation.

The protein belongs to the ferrochelatase family.

The protein resides in the cytoplasm. The enzyme catalyses heme b + 2 H(+) = protoporphyrin IX + Fe(2+). It functions in the pathway porphyrin-containing compound metabolism; protoheme biosynthesis; protoheme from protoporphyrin-IX: step 1/1. Functionally, catalyzes the ferrous insertion into protoporphyrin IX. The sequence is that of Ferrochelatase from Wigglesworthia glossinidia brevipalpis.